The chain runs to 668 residues: NADH-ubiquinone oxidoreductase chain 5 (668 aa).

A run of 18 helical transmembrane segments spans residues 1 to 21 (MYII…LFGH), 31 to 51 (IAVG…YEIL), 81 to 101 (LTSI…LYSM), 111 to 131 (TRFF…VTAD), 133 to 153 (FVQL…LINF), 178 to 198 (LFFG…SVIF), 211 to 231 (LLGY…IGVV), 251 to 271 (TPVS…FLVL), 283 to 303 (ILNI…TIGI), 311 to 331 (VIAY…GLLN), 339 to 359 (LTTH…VIHG), 375 to 395 (LMPL…GFPF), 421 to 441 (AIIG…LLIL), 462 to 482 (TNMV…GYLT), 519 to 539 (LLPL…YFNL), 566 to 586 (FDFL…YDVM), 629 to 649 (IVQA…IGFL), and 650 to 668 (YVEL…PKIK).

Belongs to the complex I subunit 5 family.

It is found in the mitochondrion inner membrane. It carries out the reaction a ubiquinone + NADH + 5 H(+)(in) = a ubiquinol + NAD(+) + 4 H(+)(out). Functionally, core subunit of the mitochondrial membrane respiratory chain NADH dehydrogenase (Complex I) that is believed to belong to the minimal assembly required for catalysis. Complex I functions in the transfer of electrons from NADH to the respiratory chain. The immediate electron acceptor for the enzyme is believed to be ubiquinone. In Dictyostelium citrinum (Slime mold), this protein is NADH-ubiquinone oxidoreductase chain 5 (nad5).